A 305-amino-acid chain; its full sequence is UPF0450 protein C17orf58 homolog (305 aa).

The signal sequence occupies residues 1–22; the sequence is MTARALWLLCLIVGWSPEAPVA. Residues 18–160 form a disordered region; the sequence is EAPVAERKAP…DREPETQSCA (143 aa). Residues 21–39 show a composition bias toward basic and acidic residues; that stretch reads VAERKAPPPHRKPDSRETP. Cystine bridges form between C159/C233, C163/C237, and C174/C304. Residues 159-304 form the NTR domain; sequence CARACSADAD…QVRGATHTQC (146 aa).

The protein belongs to the UPF0450 family.

The protein is UPF0450 protein C17orf58 homolog of Mus musculus (Mouse).